The primary structure comprises 368 residues: Cytochrome P450 119 (368 aa).

Positions 76, 80, 257, 259, 315, and 317 each coordinate heme.

Belongs to the cytochrome P450 family. The cofactor is heme.

It localises to the cytoplasm. It catalyses the reaction 2 a phenolic donor + H2O2 = 2 a phenolic radical donor + 2 H2O. In terms of biological role, the endogenous substrate is not known. In vitro, catalyzes the H(2)O(2)-dependent epoxidation of styrene, cis-beta-methylstyrene, and cis-stilbene with retention of stereochemistry. Is able to use cumene hydroperoxide (CHP) or tert-butyl hydroperoxide (TBHP) instead of H(2)O(2) as the electron acceptor. Can also hydroxylate fatty acids such as lauric acid. The sequence is that of Cytochrome P450 119 (cyp119) from Sulfolobus acidocaldarius (strain ATCC 33909 / DSM 639 / JCM 8929 / NBRC 15157 / NCIMB 11770).